A 555-amino-acid polypeptide reads, in one-letter code: Dihydroxy-acid dehydratase (555 aa).

A Mg(2+)-binding site is contributed by D78. C119 serves as a coordination point for [2Fe-2S] cluster. Residues D120 and K121 each contribute to the Mg(2+) site. K121 is subject to N6-carboxylysine. C191 is a [2Fe-2S] cluster binding site. Mg(2+) is bound at residue E444. The Proton acceptor role is filled by S470.

It belongs to the IlvD/Edd family. In terms of assembly, homodimer. The cofactor is [2Fe-2S] cluster. Mg(2+) serves as cofactor.

The enzyme catalyses (2R)-2,3-dihydroxy-3-methylbutanoate = 3-methyl-2-oxobutanoate + H2O. The catalysed reaction is (2R,3R)-2,3-dihydroxy-3-methylpentanoate = (S)-3-methyl-2-oxopentanoate + H2O. It functions in the pathway amino-acid biosynthesis; L-isoleucine biosynthesis; L-isoleucine from 2-oxobutanoate: step 3/4. The protein operates within amino-acid biosynthesis; L-valine biosynthesis; L-valine from pyruvate: step 3/4. In terms of biological role, functions in the biosynthesis of branched-chain amino acids. Catalyzes the dehydration of (2R,3R)-2,3-dihydroxy-3-methylpentanoate (2,3-dihydroxy-3-methylvalerate) into 2-oxo-3-methylpentanoate (2-oxo-3-methylvalerate) and of (2R)-2,3-dihydroxy-3-methylbutanoate (2,3-dihydroxyisovalerate) into 2-oxo-3-methylbutanoate (2-oxoisovalerate), the penultimate precursor to L-isoleucine and L-valine, respectively. This Oleidesulfovibrio alaskensis (strain ATCC BAA-1058 / DSM 17464 / G20) (Desulfovibrio alaskensis) protein is Dihydroxy-acid dehydratase.